The chain runs to 778 residues: Arf-GAP with coiled-coil, ANK repeat and PH domain-containing protein 2 (778 aa).

A BAR domain is found at 1–226 (MKMTVDFEEC…MKDLGAQLDR (226 aa)). One can recognise a PH domain in the interval 266–361 (GIVMEGYLFK…WIKAVQTSIA (96 aa)). The interval 371–391 (SEKLDKKSSPSTGSLDSGNES) is disordered. A compositionally biased stretch (polar residues) spans 379–388 (SPSTGSLDSG). Ser384 and Ser387 each carry phosphoserine. An Arf-GAP domain is found at 399–520 (ESALQRVQCV…KFVDKYSVSS (122 aa)). The segment at 414–437 (CCDCGLADPRWASINLGITLCIEC) adopts a C4-type zinc-finger fold. The interval 518 to 596 (VSSSPPEQEK…EPEGERQDSS (79 aa)) is disordered. The residue at position 521 (Ser521) is a Phosphoserine. Over residues 524-539 (EQEKKVVSKDSEEKRL) the composition is skewed to basic and acidic residues. Over residues 550–569 (VRTSIQSSVKSNDSGIQQSS) the composition is skewed to polar residues. Ser581 and Ser584 each carry phosphoserine. 3 ANK repeats span residues 640–669 (NKAT…NVNQ), 673–702 (QGRG…NQHA), and 706–735 (EGKD…NEEM). At Tyr742 the chain carries Phosphotyrosine. The residue at position 775 (Ser775) is a Phosphoserine.

Interacts with RAB35 (GTP-bound form); the interaction is direct and probably recruits ACAP2 to membranes. Interacts with MICALL1; the interaction is indirect through RAB35.

The protein resides in the endosome membrane. It is found in the cell membrane. With respect to regulation, GAP activity stimulated by phosphatidylinositol 4,5-bisphosphate (PIP2) and phosphatidic acid. Functionally, GTPase-activating protein (GAP) for ADP ribosylation factor 6 (ARF6). Doesn't show GAP activity for RAB35. This is Arf-GAP with coiled-coil, ANK repeat and PH domain-containing protein 2 (ACAP2) from Oryctolagus cuniculus (Rabbit).